The chain runs to 596 residues: Elongation factor 4 (596 aa).

The region spanning 2 to 184 (KHIRNFSIIA…EIVAKIPPPV (183 aa)) is the tr-type G domain. Residues 14–19 (DHGKST) and 131–134 (NKID) each bind GTP.

It belongs to the TRAFAC class translation factor GTPase superfamily. Classic translation factor GTPase family. LepA subfamily.

The protein resides in the cell inner membrane. The enzyme catalyses GTP + H2O = GDP + phosphate + H(+). Functionally, required for accurate and efficient protein synthesis under certain stress conditions. May act as a fidelity factor of the translation reaction, by catalyzing a one-codon backward translocation of tRNAs on improperly translocated ribosomes. Back-translocation proceeds from a post-translocation (POST) complex to a pre-translocation (PRE) complex, thus giving elongation factor G a second chance to translocate the tRNAs correctly. Binds to ribosomes in a GTP-dependent manner. This chain is Elongation factor 4, found in Shewanella denitrificans (strain OS217 / ATCC BAA-1090 / DSM 15013).